A 624-amino-acid polypeptide reads, in one-letter code: MSAIPQEILHEAVTAKKASIQPFAASEKVYLQGSRPDLRVPMRKISQSDTPTNTGREKNPPVYVYDTSGPYTDPTVSVDLRLGLPPLREPWIEERGDTELLKGPSSSYGLQRQRDPALASLRFEHIRAPRRAKGGANVTQMHYARQGIITPEMEFVAIRENQKLEALAETYKFQHPGEAFGAAIPQVITPEFVRDEVARGRAIIPSNINHPESEPMIIGRNFLVKINCNLGNSAVSSSIEEEVEKMLWAIRWGGDTVMDLSTGKNIHETREWIIRNSPVPIGTVPIYQALEKVDGKAEELTWEIFRDTLIEQAEQGVDYFTIHAGIRLPFIPLTAKRTTGIVSRGGSIMAKWCLAHHKESFLYTHFEDICEIMKAYDVAFSLGDGLRPGSIADANDEAQFAELRTLGELTRIAWKHDVQVMIEGPGHVPMHMIKANMEEQLKHCHEAPFYTLGPLTTDIAPGYDHITSAIGAAMIGWYGTAMLCYVTPKEHLGLPNKQDVRDGIIAYKIAAHAADLAKGHPGAQARDNALSKARFEFRWQDQFNLSLDPEKALEFHDETLPQEGAKQAHFCSMCGPHFCSMKITQDVRDYAREHGLDEAQALAKGMEEKSDEFVRSGAEVYQRT.

The interval 40 to 61 (VPMRKISQSDTPTNTGREKNPP) is disordered. Positions 45–54 (ISQSDTPTNT) are enriched in polar residues. Residues Asn229, Met258, Tyr287, His323, 343–345 (SRG), 384–387 (DGLR), and Glu423 each bind substrate. His427 serves as a coordination point for Zn(2+). Position 450 (Tyr450) interacts with substrate. His491 is a binding site for Zn(2+). [4Fe-4S] cluster contacts are provided by Cys571, Cys574, and Cys579.

Belongs to the ThiC family. Homodimer. Requires [4Fe-4S] cluster as cofactor.

The enzyme catalyses 5-amino-1-(5-phospho-beta-D-ribosyl)imidazole + S-adenosyl-L-methionine = 4-amino-2-methyl-5-(phosphooxymethyl)pyrimidine + CO + 5'-deoxyadenosine + formate + L-methionine + 3 H(+). It functions in the pathway cofactor biosynthesis; thiamine diphosphate biosynthesis. In terms of biological role, catalyzes the synthesis of the hydroxymethylpyrimidine phosphate (HMP-P) moiety of thiamine from aminoimidazole ribotide (AIR) in a radical S-adenosyl-L-methionine (SAM)-dependent reaction. The protein is Phosphomethylpyrimidine synthase of Methylococcus capsulatus (strain ATCC 33009 / NCIMB 11132 / Bath).